The chain runs to 68 residues: Lividin-1 (68 aa).

The N-terminal stretch at 1–22 (MFTLKKSLLLLFFLGTINLSLC) is a signal peptide. The propeptide occupies 23–42 (QEERNADEEERRDERNVEVE). Cys-62 and Cys-68 are oxidised to a cystine.

In terms of tissue distribution, expressed by the skin glands.

It localises to the secreted. Functionally, antimicrobial peptide. This Odorrana livida (Green mountain frog) protein is Lividin-1.